The chain runs to 338 residues: MLFQNVSIAGLAHIDAPHTLTSKEINERLQPTYDRLGIKTDVLGDVAGIHARRLWDQDVQASDAATQAARKALIDANIGIEKIGLLINTSVSRDYLEPSTASIVSGNLGVSDHCMTFDVANACLAFINGMDIAARMLERGEIDYALVVDGETANLVYEKTLERMTSPDVTEEEFRNELAALTLGCGAAAMVMARSELVPDAPRYKGGVTRSATEWNKLCRGNLDRMVTDTRLLLIEGIKLAQKTFVAAKQVLGWAVEELDQFVIHQVSRPHTAAFVKSFGIDPAKVMTIFGEHGNIGPASVPIVLSKLKELGRLKKGDRIALLGIGSGLNCSMAEVVW.

Mn(2+) contacts are provided by histidine 18 and aspartate 56. The Proton acceptor role is filled by glutamate 97. Cysteine 123 acts as the Acyl-thioester intermediate in catalysis.

The protein belongs to the thiolase-like superfamily. OleA family. Homodimer. Weakly associates with the OleBCD complex.

The protein localises to the cytoplasm. The enzyme catalyses a 1,2-saturated acyl-CoA + an acyl-CoA + H2O = an (R)-2-alkyl-3-oxoalkanoate + 2 CoA + H(+). Inhibited by cerulenin. Involved in olefin biosynthesis. Catalyzes a non-decarboxylative head-to-head Claisen condensation of two acyl-CoA molecules, generating an (R)-2-alkyl-3-oxoalkanoate. Is active with fatty acyl-CoA substrates that ranged from C(8) to C(16) in length, and is the most active with palmitoyl-CoA and myristoyl-CoA. The polypeptide is Acyl-CoA:acyl-CoA alkyltransferase (Xanthomonas campestris pv. campestris (strain ATCC 33913 / DSM 3586 / NCPPB 528 / LMG 568 / P 25)).